The sequence spans 62 residues: DNA-directed RNA polymerase subunit Rpo10 (62 aa).

Cysteine 6, cysteine 9, cysteine 43, and cysteine 44 together coordinate Zn(2+).

This sequence belongs to the archaeal Rpo10/eukaryotic RPB10 RNA polymerase subunit family. As to quaternary structure, part of the RNA polymerase complex. The cofactor is Zn(2+).

It localises to the cytoplasm. It carries out the reaction RNA(n) + a ribonucleoside 5'-triphosphate = RNA(n+1) + diphosphate. In terms of biological role, DNA-dependent RNA polymerase (RNAP) catalyzes the transcription of DNA into RNA using the four ribonucleoside triphosphates as substrates. The protein is DNA-directed RNA polymerase subunit Rpo10 of Methanospirillum hungatei JF-1 (strain ATCC 27890 / DSM 864 / NBRC 100397 / JF-1).